The primary structure comprises 302 residues: tRNA pseudouridine synthase B (302 aa).

Residue D43 is the Nucleophile of the active site.

It belongs to the pseudouridine synthase TruB family. Type 1 subfamily.

It carries out the reaction uridine(55) in tRNA = pseudouridine(55) in tRNA. Responsible for synthesis of pseudouridine from uracil-55 in the psi GC loop of transfer RNAs. This Burkholderia mallei (strain NCTC 10247) protein is tRNA pseudouridine synthase B.